A 470-amino-acid polypeptide reads, in one-letter code: Uronate isomerase (470 aa).

This sequence belongs to the metallo-dependent hydrolases superfamily. Uronate isomerase family.

The enzyme catalyses D-glucuronate = D-fructuronate. It catalyses the reaction aldehydo-D-galacturonate = keto-D-tagaturonate. It participates in carbohydrate metabolism; pentose and glucuronate interconversion. This chain is Uronate isomerase, found in Vibrio vulnificus (strain CMCP6).